Consider the following 458-residue polypeptide: NADH-quinone oxidoreductase subunit N (458 aa).

14 helical membrane passes run 2–22, 30–50, 71–91, 93–113, 118–138, 153–173, 196–216, 235–255, 261–281, 290–310, 319–339, 361–381, 397–417, and 438–458; these read LLLL…CFAL, IIYN…FKYS, IILL…ILVG, TLKF…FVAI, FLLL…LAGF, FILG…IYGF, LIIG…SSPL, FTAA…KLII, INYN…AFGA, LMAY…LLHN, LYIL…IMLF, IAAL…LTGF, FTLA…YLKV, and LLLI…IILF.

Belongs to the complex I subunit 2 family. In terms of assembly, NDH-1 is composed of 14 different subunits. Subunits NuoA, H, J, K, L, M, N constitute the membrane sector of the complex.

The protein resides in the cell inner membrane. The enzyme catalyses a quinone + NADH + 5 H(+)(in) = a quinol + NAD(+) + 4 H(+)(out). In terms of biological role, NDH-1 shuttles electrons from NADH, via FMN and iron-sulfur (Fe-S) centers, to quinones in the respiratory chain. The immediate electron acceptor for the enzyme in this species is believed to be ubiquinone. Couples the redox reaction to proton translocation (for every two electrons transferred, four hydrogen ions are translocated across the cytoplasmic membrane), and thus conserves the redox energy in a proton gradient. This is NADH-quinone oxidoreductase subunit N from Rickettsia prowazekii (strain Madrid E).